A 457-amino-acid chain; its full sequence is Chromosomal replication initiator protein DnaA (457 aa).

Residues 1-81 are domain I, interacts with DnaA modulators; that stretch reads MERDLSQLWQ…NNTDLVIKVQ (81 aa). The interval 81-119 is domain II; it reads QEGSKPAARKVVAQQEIANTPVQHSAPMPENEPQAAFRS. The segment at 120–337 is domain III, AAA+ region; sequence NLNQHHLFEN…GALNRVHANA (218 aa). ATP is bound by residues G165, G167, K168, and T169. Residues 338–457 form a domain IV, binds dsDNA region; sequence DFTGKAITID…WSNLIRTLSA (120 aa).

Belongs to the DnaA family. In terms of assembly, oligomerizes as a right-handed, spiral filament on DNA at oriC.

The protein resides in the cytoplasm. Its function is as follows. Plays an essential role in the initiation and regulation of chromosomal replication. ATP-DnaA binds to the origin of replication (oriC) to initiate formation of the DNA replication initiation complex once per cell cycle. Binds the DnaA box (a 9 base pair repeat at the origin) and separates the double-stranded (ds)DNA. Forms a right-handed helical filament on oriC DNA; dsDNA binds to the exterior of the filament while single-stranded (ss)DNA is stabiized in the filament's interior. The ATP-DnaA-oriC complex binds and stabilizes one strand of the AT-rich DNA unwinding element (DUE), permitting loading of DNA polymerase. After initiation quickly degrades to an ADP-DnaA complex that is not apt for DNA replication. Binds acidic phospholipids. This Mannheimia succiniciproducens (strain KCTC 0769BP / MBEL55E) protein is Chromosomal replication initiator protein DnaA.